A 154-amino-acid polypeptide reads, in one-letter code: 2S sulfur-rich seed storage protein 2 (154 aa).

Residues 1–22 (MAKMSVVAAALLALLVLGQATA) form the signal peptide. The interval 29–52 (TTLEEEQEENPRGRSEQQCREQME) is disordered. Over residues 37–52 (ENPRGRSEQQCREQME) the composition is skewed to basic and acidic residues. Disulfide bonds link Cys-47-Cys-101, Cys-60-Cys-90, Cys-91-Cys-138, and Cys-103-Cys-145. The propeptide occupies 72–76 (PYQNP). The propeptide occupies 151–154 (TAWL).

It belongs to the 2S seed storage albumins family. In terms of assembly, the mature protein consists of a small and a large chain linked by disulfide bonds.

In terms of biological role, this is a 2S seed storage protein. In Bertholletia excelsa (Brazil nut), this protein is 2S sulfur-rich seed storage protein 2 (BE2S2).